The following is a 284-amino-acid chain: Ribosomal RNA small subunit methyltransferase A (284 aa).

S-adenosyl-L-methionine contacts are provided by His23, Leu25, Gly50, Glu71, Asp92, and Asn121.

This sequence belongs to the class I-like SAM-binding methyltransferase superfamily. rRNA adenine N(6)-methyltransferase family. RsmA subfamily.

The protein resides in the cytoplasm. The enzyme catalyses adenosine(1518)/adenosine(1519) in 16S rRNA + 4 S-adenosyl-L-methionine = N(6)-dimethyladenosine(1518)/N(6)-dimethyladenosine(1519) in 16S rRNA + 4 S-adenosyl-L-homocysteine + 4 H(+). In terms of biological role, specifically dimethylates two adjacent adenosines (A1518 and A1519) in the loop of a conserved hairpin near the 3'-end of 16S rRNA in the 30S particle. May play a critical role in biogenesis of 30S subunits. The sequence is that of Ribosomal RNA small subunit methyltransferase A from Verminephrobacter eiseniae (strain EF01-2).